The primary structure comprises 297 residues: tRNA pseudouridine synthase B (297 aa).

Asp-44 (nucleophile) is an active-site residue.

This sequence belongs to the pseudouridine synthase TruB family. Type 1 subfamily.

It carries out the reaction uridine(55) in tRNA = pseudouridine(55) in tRNA. In terms of biological role, responsible for synthesis of pseudouridine from uracil-55 in the psi GC loop of transfer RNAs. This is tRNA pseudouridine synthase B from Mycobacterium sp. (strain JLS).